Reading from the N-terminus, the 547-residue chain is Cytochrome P450 78A1 (547 aa).

Residues 84-94 (ASSRCPGAAAP) show a composition bias toward low complexity. The disordered stretch occupies residues 84 to 104 (ASSRCPGAAAPRPRRDGPRRR). Position 490 (Cys-490) interacts with heme.

Belongs to the cytochrome P450 family. Heme serves as cofactor. In terms of tissue distribution, shoot apex.

In Zea mays (Maize), this protein is Cytochrome P450 78A1 (CYP78A1).